Reading from the N-terminus, the 57-residue chain is Large ribosomal subunit protein bL32 (57 aa).

The protein belongs to the bacterial ribosomal protein bL32 family.

The sequence is that of Large ribosomal subunit protein bL32 from Halothermothrix orenii (strain H 168 / OCM 544 / DSM 9562).